The chain runs to 211 residues: Pyridoxine/pyridoxamine 5'-phosphate oxidase (211 aa).

Substrate-binding positions include 8–11 and K66; that span reads RRDY. FMN contacts are provided by residues 61-66, 76-77, R82, K83, and Q105; these read RLVLLK and FT. The substrate site is built by Y123, R127, and S131. Residues 140–141 and W184 each bind FMN; that span reads QS. 190-192 contributes to the substrate binding site; that stretch reads RLH. R194 lines the FMN pocket.

It belongs to the pyridoxamine 5'-phosphate oxidase family. As to quaternary structure, homodimer. It depends on FMN as a cofactor.

It catalyses the reaction pyridoxamine 5'-phosphate + O2 + H2O = pyridoxal 5'-phosphate + H2O2 + NH4(+). The enzyme catalyses pyridoxine 5'-phosphate + O2 = pyridoxal 5'-phosphate + H2O2. Its pathway is cofactor metabolism; pyridoxal 5'-phosphate salvage; pyridoxal 5'-phosphate from pyridoxamine 5'-phosphate: step 1/1. The protein operates within cofactor metabolism; pyridoxal 5'-phosphate salvage; pyridoxal 5'-phosphate from pyridoxine 5'-phosphate: step 1/1. In terms of biological role, catalyzes the oxidation of either pyridoxine 5'-phosphate (PNP) or pyridoxamine 5'-phosphate (PMP) into pyridoxal 5'-phosphate (PLP). The protein is Pyridoxine/pyridoxamine 5'-phosphate oxidase of Thermosynechococcus vestitus (strain NIES-2133 / IAM M-273 / BP-1).